The sequence spans 1171 residues: Myosin-B/C (1171 aa).

A Myosin motor domain is found at 105-780 (ETVDDIGYLP…AAKELSILQR (676 aa)). ATP is bound at residue 199–206 (GESGAGKT). Residues 671–681 (AHFIRCLKPNE) are actin-binding. Residues 810-1171 (IHFLTRLESN…CFEACAPDRP (362 aa)) are tail.

It belongs to the TRAFAC class myosin-kinesin ATPase superfamily. Myosin family.

It is found in the cytoplasm. In terms of biological role, myosins are actin-based motor molecules with ATPase activity. Unconventional myosins serve in intracellular movements. Their highly divergent tails are presumed to bind to membranous compartments, which would be moved relative to actin filaments. Plays a role in proper daughter cell budding and separation. The polypeptide is Myosin-B/C (Toxoplasma gondii).